A 465-amino-acid chain; its full sequence is Macrophage metalloelastase (465 aa).

Positions 1–21 (MKFLLVLVLLVSLQVSACGAA) are cleaved as a signal peptide. The propeptide at 22 to 101 (PMNESEFAEW…DVQHLRAVPQ (80 aa)) is activation peptide. Residues 86–93 (SRCGVPDV) carry the Cysteine switch motif. Position 88 (Cys88) interacts with Zn(2+). Positions 120 and 154 each coordinate Ca(2+). 2 residues coordinate Zn(2+): His164 and Asp166. Ca(2+) contacts are provided by Asp171, Gly172, Gly174, and Thr176. Zn(2+) is bound at residue His179. The Ca(2+) site is built by Gly186 and Asp190. Residue His192 coordinates Zn(2+). Ca(2+) contacts are provided by Asp194, Glu195, and Glu197. A Zn(2+)-binding site is contributed by His214. Residue Glu215 is part of the active site. 2 residues coordinate Zn(2+): His218 and His224. An intrachain disulfide couples Cys278 to Cys465. Hemopexin repeat units follow at residues 281–324 (SLSF…WPTI), 325–371 (PSGI…GFPA), 373–421 (VKKI…FPGI), and 422–465 (RPKI…WFGC). Asp285 serves as a coordination point for Ca(2+). Asn313 carries N-linked (GlcNAc...) asparagine glycosylation. Positions 377 and 426 each coordinate Ca(2+).

This sequence belongs to the peptidase M10A family. The cofactor is Ca(2+). Zn(2+) is required as a cofactor.

It is found in the secreted. Its subcellular location is the extracellular space. It localises to the extracellular matrix. The catalysed reaction is Hydrolysis of soluble and insoluble elastin. Specific cleavages are also produced at 14-Ala-|-Leu-15 and 16-Tyr-|-Leu-17 in the B chain of insulin.. May be involved in tissue injury and remodeling. Has significant elastolytic activity. Can accept large and small amino acids at the P1' site, but has a preference for leucine. Aromatic or hydrophobic residues are preferred at the P1 site, with small hydrophobic residues (preferably alanine) occupying P3. This chain is Macrophage metalloelastase (Mmp12), found in Rattus norvegicus (Rat).